We begin with the raw amino-acid sequence, 487 residues long: UDP-N-acetylmuramoyl-L-alanyl-D-glutamate--2,6-diaminopimelate ligase (487 aa).

Leu-23 and Ser-25 together coordinate UDP-N-acetyl-alpha-D-muramoyl-L-alanyl-D-glutamate. Residue 108-114 (GTNGKTS) participates in ATP binding. UDP-N-acetyl-alpha-D-muramoyl-L-alanyl-D-glutamate contacts are provided by residues 150–151 (TT), Ser-177, Gln-183, and Arg-185. Lys-217 carries the N6-carboxylysine modification. Residues Arg-378, 402 to 405 (DNPR), Gly-453, and Glu-457 each bind meso-2,6-diaminopimelate. Residues 402–405 (DNPR) carry the Meso-diaminopimelate recognition motif motif.

This sequence belongs to the MurCDEF family. MurE subfamily. It depends on Mg(2+) as a cofactor. Post-translationally, carboxylation is probably crucial for Mg(2+) binding and, consequently, for the gamma-phosphate positioning of ATP.

The protein localises to the cytoplasm. It catalyses the reaction UDP-N-acetyl-alpha-D-muramoyl-L-alanyl-D-glutamate + meso-2,6-diaminopimelate + ATP = UDP-N-acetyl-alpha-D-muramoyl-L-alanyl-gamma-D-glutamyl-meso-2,6-diaminopimelate + ADP + phosphate + H(+). Its pathway is cell wall biogenesis; peptidoglycan biosynthesis. Catalyzes the addition of meso-diaminopimelic acid to the nucleotide precursor UDP-N-acetylmuramoyl-L-alanyl-D-glutamate (UMAG) in the biosynthesis of bacterial cell-wall peptidoglycan. This chain is UDP-N-acetylmuramoyl-L-alanyl-D-glutamate--2,6-diaminopimelate ligase, found in Pseudomonas syringae pv. tomato (strain ATCC BAA-871 / DC3000).